The chain runs to 299 residues: Superkiller complex protein 8 (299 aa).

WD repeat units lie at residues 11–48 (AHED…FLTE), 54–93 (KHIL…LHKT), 96–135 (SGPL…KLRS), 138–177 (NTNK…RVSE), 180–219 (AHGV…PYIA), 223–263 (GHSS…LDSS), and 266–299 (AHAD…ALKQ).

Belongs to the SKI8 family.

The protein is Superkiller complex protein 8 (skic8) of Dictyostelium discoideum (Social amoeba).